Reading from the N-terminus, the 190-residue chain is dCTP deaminase (190 aa).

Residue 113-118 (KSTYAR) participates in dCTP binding. Residue E139 is the Proton donor/acceptor of the active site. The dCTP site is built by Q158, Y172, K181, and Q182.

This sequence belongs to the dCTP deaminase family. Homotrimer.

The catalysed reaction is dCTP + H2O + H(+) = dUTP + NH4(+). Its pathway is pyrimidine metabolism; dUMP biosynthesis; dUMP from dCTP (dUTP route): step 1/2. Functionally, catalyzes the deamination of dCTP to dUTP. The chain is dCTP deaminase from Chlamydia trachomatis serovar L2 (strain ATCC VR-902B / DSM 19102 / 434/Bu).